We begin with the raw amino-acid sequence, 773 residues long: Cellobiose dehydrogenase (773 aa).

The first 18 residues, 1 to 18 (MLGRSLLALLPFVGLAFS), serve as a signal peptide directing secretion. Gln-19 carries the post-translational modification Pyrrolidone carboxylic acid. A heme domain region spans residues 19 to 208 (QSASQFTDPT…YQNYLNGDSG (190 aa)). The heme site is built by Met-83 and His-181. The tract at residues 203–227 (LNGDSGNPTTTSTKPTSTSSSVTTG) is disordered. Over residues 210–227 (PTTTSTKPTSTSSSVTTG) the composition is skewed to low complexity. Residues 235–773 (YDYIIVGAGP…AKILALAGGP (539 aa)) are oxidoreductase. 236–265 (DYIIVGAGPGGIIAADRLSEAGKKVLLLER) is a binding site for FAD. The Proton acceptor role is filled by His-707.

It in the C-terminal section; belongs to the GMC oxidoreductase family. It depends on FAD as a cofactor. Heme serves as cofactor.

It localises to the secreted. It catalyses the reaction D-cellobiose + A = D-cellobiono-1,5-lactone + AH2. In terms of biological role, degrades both lignin and cellulose. Oxidizes cellobiose to cellobionolactone. The chain is Cellobiose dehydrogenase (CDH-1) from Phanerodontia chrysosporium (White-rot fungus).